The sequence spans 645 residues: MKVGVIETHHSHPIIPSVVVQDTSEDPGLIEKGENRFARQWYLPGAFAQYNINNNSNKDEEKKKKKEKKSKSENKKDGERQKNKEKKEKHKNKDKKKGKEEEKKKDIFIIDPAGNMYYNWLFCITMPVMYNWTMIIARACFDELQNDYLAVWFIVDYVSDVIYIADMFVRTRTGYLEQGLLVKEEQKLKEKYKSSLQFKLDFLSIIPTDLLYFKLGLNYPELRINRLLRVARMFEFFQRTETRTNYPNIFRISNLVMYIVIIIHWNACVYYSISKAIGFGADTWVYPNTSHPEFARLTRKYVYSLYWSTLTLTTIGETPPPVRDSEYFFVVVDFLVGVLIFATIVGNVGSMISNMNAARAEFQAKIDAIKQYMHFRNVSKDMEKRVIKWFDYLWTNKKAVDEREVLKYLPDKLRAEIAINVHLETLKKVRIFADCEAGLLVELVLKLQPQVYSPGDYICRKGDIGREMYIIKEGKLAVVADDGVTQFVVLSDGSYFGEISILNIKGSKAGNRRTANIRSIGYSDLFCLSKDDLMEALTEYPDAKAMLEEKGKQILMKDGLLDIEVANLGSDPKDLEEKVAYMEGSMDRLQTKFARLLAEYDAAQQKLKKRLTQIEKILKPVMEQEFLDFEEADPPTDKPGVTKTE.

The Cytoplasmic portion of the chain corresponds to 1–121; sequence MKVGVIETHH…PAGNMYYNWL (121 aa). The disordered stretch occupies residues 53–100; it reads NNNSNKDEEKKKKKEKKSKSENKKDGERQKNKEKKEKHKNKDKKKGKE. Residues 70–86 are compositionally biased toward basic and acidic residues; sequence SKSENKKDGERQKNKEK. Residues 87-96 are compositionally biased toward basic residues; it reads KEKHKNKDKK. Residues 122–143 traverse the membrane as a helical segment; it reads FCITMPVMYNWTMIIARACFDE. The Extracellular segment spans residues 144–153; sequence LQNDYLAVWF. The chain crosses the membrane as a helical span at residues 154 to 174; sequence IVDYVSDVIYIADMFVRTRTG. At 175 to 199 the chain is on the cytoplasmic side; sequence YLEQGLLVKEEQKLKEKYKSSLQFK. Residues 200 to 218 traverse the membrane as a helical segment; that stretch reads LDFLSIIPTDLLYFKLGLN. The Extracellular portion of the chain corresponds to 219 to 223; that stretch reads YPELR. A helical transmembrane segment spans residues 224 to 242; that stretch reads INRLLRVARMFEFFQRTET. Residues 243–249 lie on the Cytoplasmic side of the membrane; that stretch reads RTNYPNI. Residues 250-273 form a helical membrane-spanning segment; sequence FRISNLVMYIVIIIHWNACVYYSI. The Extracellular portion of the chain corresponds to 274 to 296; sequence SKAIGFGADTWVYPNTSHPEFAR. The next 2 helical transmembrane spans lie at 297–331 and 332–356; these read LTRKYVYSLYWSTLTLTTIGETPPPVRDSEYFFVV and VDFLVGVLIFATIVGNVGSMISNMN. Residues 357–645 are Cytoplasmic-facing; the sequence is AARAEFQAKI…TDKPGVTKTE (289 aa). Residues 439–561, glutamate 498, and arginine 513 contribute to the 3',5'-cyclic GMP site; that span reads LLVE…DGLL.

It belongs to the cyclic nucleotide-gated cation channel (TC 1.A.1.5) family.

The protein resides in the membrane. Visual signal transduction is mediated by a G-protein coupled cascade using cGMP as second messenger. This protein can be activated by cGMP which leads to an opening of the cation channel and thereby causing a depolarization of rod photoreceptors. This chain is Cyclic nucleotide-gated channel rod photoreceptor subunit alpha, found in Gallus gallus (Chicken).